The primary structure comprises 519 residues: Seed lectin (519 aa).

Disulfide bonds link C249-C258 and C274-C293. Ricin B-type lectin domains lie at 261–387 and 390–518; these read ETRT…WRVG and VQPI…WVLF. A 1-alpha repeat occupies 271–311; the sequence is DALCVDVAGALTSDGSRLILYPCGQQVNQKWTFHSDGTVRS. A carbohydrate-binding positions include 276-279 and 296-298; these read DVAG and QVN. A 1-beta repeat occupies 312 to 352; it reads LGKCLATNNSKFGNLVVIYDCSKLAAEDISWDVSVGGTIMN. A disulfide bridge links C315 with C332. The 1-gamma repeat unit spans residues 356-388; sequence EDLALTSNKATRSTNLTMEVNTYSASQGWRVGN. The N-linked (GlcNAc...) asparagine glycan is linked to N370. The stretch at 401 to 438 is one 2-alpha repeat; sequence DDMCLEATDGNTNMWLEECVPNQREQSWALYSDGTIRV. Disulfide bonds link C404–C419 and C445–C464. A 2-beta repeat occupies 442 to 482; it reads RELCVTASSSTYDNWKVITILNCDGSNNQRWVFLADGSIST. Residues D454, 491 to 494, 505 to 508, and N512 contribute to the a carbohydrate site; these read DVAR and HRPH. The stretch at 486–513 is one 2-gamma repeat; sequence QRLAMDVARSDVDLKKIILHRPHGDLNQ.

The protein in the N-terminal section; belongs to the ribosome-inactivating protein family. Type 2 RIP subfamily. As to quaternary structure, heterotrimer consisting of Aalpha, Abeta and B chains with Abeta and B being disulfide-linked.

Its function is as follows. Seed lectin similar to type 2 ribosome-inactivating proteins. The Aalpha and Abeta chains constitute the rRNA glycosidase domain and the B chain the carbohydrate-binding lectin domain. Is predicted to have no glycosidase activity and, hence, to be non-toxic, due to small changes in both the nucleotide binding and carbohydrate binding capabilities. Binds galactose and derivatives with a preference for the beta-anomeric forms. Binds prophyrins. Has hemagglutinating activity towards rabbit and human erythrocytes. The chain is Seed lectin from Trichosanthes anguina (Snake gourd).